Here is a 297-residue protein sequence, read N- to C-terminus: Small ribosomal subunit protein uS2 (297 aa).

Residues 266–297 (GASWDAAEPSDWAATPAAAGQEWAASGATEQW) form a disordered region. Over residues 282-297 (AAAGQEWAASGATEQW) the composition is skewed to low complexity.

The protein belongs to the universal ribosomal protein uS2 family. Component of the small ribosomal subunit. Mature ribosomes consist of a small (40S) and a large (60S) subunit. The 40S subunit contains about 33 different proteins and 1 molecule of RNA (18S). The 60S subunit contains about 49 different proteins and 3 molecules of RNA (25S, 5.8S and 5S). Interacts with rps21.

The protein localises to the cytoplasm. Functionally, required for the assembly and/or stability of the 40S ribosomal subunit. Required for the processing of the 20S rRNA-precursor to mature 18S rRNA in a late step of the maturation of 40S ribosomal subunits. The chain is Small ribosomal subunit protein uS2 (rps0) from Sclerotinia sclerotiorum (strain ATCC 18683 / 1980 / Ss-1) (White mold).